The sequence spans 97 residues: UPF0250 protein HD_2015 (97 aa).

It belongs to the UPF0250 family.

The sequence is that of UPF0250 protein HD_2015 from Haemophilus ducreyi (strain 35000HP / ATCC 700724).